Consider the following 259-residue polypeptide: Keratin-associated protein 10-8 (259 aa).

The tract at residues 26–243 (HVSRVSSPST…SCQPSCCHPA (218 aa)) is 19 X 5 AA repeats of C-C-X(3). 19 tandem repeats follow at residues 50 to 54 (CCEPR), 60 to 64 (CCTPS), 65 to 69 (CCAPA), 98 to 102 (CCQQS), 108 to 112 (CCTSS), 118 to 122 (CCVPV), 123 to 127 (CCKSN), 133 to 137 (CCVSI), 145 to 149 (CCQQS), 155 to 159 (CCTFS), 165 to 169 (CCVPI), 170 to 174 (CCKPI), 175 to 179 (CCVPV), 187 to 191 (CCQKS), 197 to 201 (CCTTS), 202 to 206 (CCRPS), 221 to 225 (CCVPV), 228 to 232 (CCVPA), and 239 to 243 (CCHPA).

Belongs to the KRTAP type 10 family. In terms of assembly, interacts with hair keratins. In terms of tissue distribution, restricted to a narrow region of the hair fiber cuticle, lying approximately 20 cell layers above the apex of the dermal papilla of the hair root; not detected in any other tissues.

Its function is as follows. In the hair cortex, hair keratin intermediate filaments are embedded in an interfilamentous matrix, consisting of hair keratin-associated proteins (KRTAP), which are essential for the formation of a rigid and resistant hair shaft through their extensive disulfide bond cross-linking with abundant cysteine residues of hair keratins. The matrix proteins include the high-sulfur and high-glycine-tyrosine keratins. The protein is Keratin-associated protein 10-8 (KRTAP10-8) of Homo sapiens (Human).